The following is a 176-amino-acid chain: Ribosome maturation factor RimM (176 aa).

Residues 96–176 (PEDEFYWRDL…QILVDWDPDF (81 aa)) form the PRC barrel domain.

Belongs to the RimM family. Binds ribosomal protein uS19.

It is found in the cytoplasm. Functionally, an accessory protein needed during the final step in the assembly of 30S ribosomal subunit, possibly for assembly of the head region. Essential for efficient processing of 16S rRNA. May be needed both before and after RbfA during the maturation of 16S rRNA. It has affinity for free ribosomal 30S subunits but not for 70S ribosomes. In Shewanella piezotolerans (strain WP3 / JCM 13877), this protein is Ribosome maturation factor RimM.